The following is a 509-amino-acid chain: Monofunctional riboflavin biosynthesis protein RIBA 3, chloroplastic (509 aa).

The N-terminal 43 residues, 1-43, are a transit peptide targeting the chloroplast; it reads MMDSALYHPRIFFAHSFINGLYSSPRFANTCWRLVSRSSWEIK. An inactive DHBP synthase region spans residues 44-302; that stretch reads ASENSDRNVF…LTDLIRYRRK (259 aa). D-ribulose 5-phosphate is bound by residues 125–126 and 240–244; these read GD and RAGHT. The segment at 303-509 is GTP cyclohydrolase II; sequence RDKLVERITV…ISDNNDQPLA (207 aa). Position 353–357 (353–357) interacts with GTP; it reads RVHSE. Zn(2+) contacts are provided by Cys358, Cys369, and Cys371. GTP-binding positions include Gln374, 397 to 399, and Thr419; that span reads EGR. Asp431 functions as the Proton acceptor; for GTP cyclohydrolase activity in the catalytic mechanism. The Nucleophile; for GTP cyclohydrolase activity role is filled by Arg433. GTP is bound by residues Thr454 and Lys459.

In the N-terminal section; belongs to the DHBP synthase family. It in the C-terminal section; belongs to the GTP cyclohydrolase II family. Zn(2+) is required as a cofactor. In terms of tissue distribution, expressed in leaves, shoots, roots, flowers and siliques.

It localises to the plastid. It is found in the chloroplast. The enzyme catalyses GTP + 4 H2O = 2,5-diamino-6-hydroxy-4-(5-phosphoribosylamino)-pyrimidine + formate + 2 phosphate + 3 H(+). The protein operates within cofactor biosynthesis; riboflavin biosynthesis; 5-amino-6-(D-ribitylamino)uracil from GTP: step 1/4. Functionally, involved in riboflavin biosynthesis. Catalyzes the conversion of GTP to 2,5-diamino-6-ribosylamino-4(3H)-pyrimidinone 5'-phosphate (DARP), formate and pyrophosphate. RIBA2 and RIBA3 together are not able to complement the loss of function of RIBA1. The protein is Monofunctional riboflavin biosynthesis protein RIBA 3, chloroplastic (RIBA3) of Arabidopsis thaliana (Mouse-ear cress).